Consider the following 299-residue polypeptide: Porphobilinogen deaminase (299 aa).

Cysteine 242 is modified (S-(dipyrrolylmethanemethyl)cysteine).

It belongs to the HMBS family. Monomer. Dipyrromethane serves as cofactor.

It carries out the reaction 4 porphobilinogen + H2O = hydroxymethylbilane + 4 NH4(+). The protein operates within porphyrin-containing compound metabolism; protoporphyrin-IX biosynthesis; coproporphyrinogen-III from 5-aminolevulinate: step 2/4. Functionally, tetrapolymerization of the monopyrrole PBG into the hydroxymethylbilane pre-uroporphyrinogen in several discrete steps. This is Porphobilinogen deaminase from Rickettsia typhi (strain ATCC VR-144 / Wilmington).